Reading from the N-terminus, the 66-residue chain is MPKLKTNSSAKKRFKVTSTGKVMVTQSGKRHNMRKRNKRMLLVQKGYTLISKSKMRLMRSVMPYSF.

It belongs to the bacterial ribosomal protein bL35 family.

The polypeptide is Large ribosomal subunit protein bL35 (Neorickettsia sennetsu (strain ATCC VR-367 / Miyayama) (Ehrlichia sennetsu)).